The sequence spans 212 residues: Glycerol-3-phosphate acyltransferase (212 aa).

5 helical membrane passes run 3–23 (ILLA…VVVS), 51–71 (KAAI…VWLA), 78–98 (DVAV…PVFF), 115–135 (AVHP…AFFF), and 139–159 (SLAA…LFGT).

The protein belongs to the PlsY family. In terms of assembly, probably interacts with PlsX.

The protein resides in the cell inner membrane. It carries out the reaction an acyl phosphate + sn-glycerol 3-phosphate = a 1-acyl-sn-glycero-3-phosphate + phosphate. It participates in lipid metabolism; phospholipid metabolism. In terms of biological role, catalyzes the transfer of an acyl group from acyl-phosphate (acyl-PO(4)) to glycerol-3-phosphate (G3P) to form lysophosphatidic acid (LPA). This enzyme utilizes acyl-phosphate as fatty acyl donor, but not acyl-CoA or acyl-ACP. This chain is Glycerol-3-phosphate acyltransferase, found in Burkholderia ambifaria (strain MC40-6).